The sequence spans 176 residues: dCTP deaminase (176 aa).

DCTP contacts are provided by residues 99–104 (RSTLAR) and D115. Catalysis depends on E125, which acts as the Proton donor/acceptor. Residue Q163 participates in dCTP binding.

Belongs to the dCTP deaminase family. In terms of assembly, homotrimer.

The enzyme catalyses dCTP + H2O + H(+) = dUTP + NH4(+). Its pathway is pyrimidine metabolism; dUMP biosynthesis; dUMP from dCTP (dUTP route): step 1/2. In terms of biological role, catalyzes the deamination of dCTP to dUTP. This chain is dCTP deaminase, found in Pyrobaculum arsenaticum (strain DSM 13514 / JCM 11321 / PZ6).